The chain runs to 337 residues: Transcription initiation factor IIB (337 aa).

The TFIIB-type zinc-finger motif lies at Tyr37–Asp68. Zn(2+) contacts are provided by Cys41, Cys44, Cys60, and Cys63. A run of 2 repeats spans residues Ser154–Leu237 and Asp248–Glu329.

The protein belongs to the TFIIB family.

Stabilizes TBP binding to an archaeal box-A promoter. Also responsible for recruiting RNA polymerase II to the pre-initiation complex (DNA-TBP-TFIIB). The chain is Transcription initiation factor IIB from Methanothrix thermoacetophila (strain DSM 6194 / JCM 14653 / NBRC 101360 / PT) (Methanosaeta thermophila).